The sequence spans 455 residues: Bifunctional protein GlmU (455 aa).

The tract at residues 1–228 is pyrophosphorylase; sequence MNNTLTTIIL…EFEIEGVNNR (228 aa). Residues 10 to 13, lysine 24, glutamine 75, 80 to 81, 102 to 104, glycine 138, glutamate 153, asparagine 168, and asparagine 226 contribute to the UDP-N-acetyl-alpha-D-glucosamine site; these read LAAG, GT, and YGD. Mg(2+) is bound at residue aspartate 104. Asparagine 226 provides a ligand contact to Mg(2+). The segment at 229–249 is linker; that stretch reads QQLAQLERKWQAKLVEDLQVQ. An N-acetyltransferase region spans residues 250-455; that stretch reads GVQFADPNRV…DNYQRPEKKK (206 aa). Positions 332 and 350 each coordinate UDP-N-acetyl-alpha-D-glucosamine. The active-site Proton acceptor is histidine 362. Positions 365 and 376 each coordinate UDP-N-acetyl-alpha-D-glucosamine. Acetyl-CoA-binding positions include alanine 379, 385–386, alanine 422, and arginine 439; that span reads NY.

This sequence in the N-terminal section; belongs to the N-acetylglucosamine-1-phosphate uridyltransferase family. It in the C-terminal section; belongs to the transferase hexapeptide repeat family. Homotrimer. The cofactor is Mg(2+).

Its subcellular location is the cytoplasm. The enzyme catalyses alpha-D-glucosamine 1-phosphate + acetyl-CoA = N-acetyl-alpha-D-glucosamine 1-phosphate + CoA + H(+). It carries out the reaction N-acetyl-alpha-D-glucosamine 1-phosphate + UTP + H(+) = UDP-N-acetyl-alpha-D-glucosamine + diphosphate. It participates in nucleotide-sugar biosynthesis; UDP-N-acetyl-alpha-D-glucosamine biosynthesis; N-acetyl-alpha-D-glucosamine 1-phosphate from alpha-D-glucosamine 6-phosphate (route II): step 2/2. The protein operates within nucleotide-sugar biosynthesis; UDP-N-acetyl-alpha-D-glucosamine biosynthesis; UDP-N-acetyl-alpha-D-glucosamine from N-acetyl-alpha-D-glucosamine 1-phosphate: step 1/1. Its pathway is bacterial outer membrane biogenesis; LPS lipid A biosynthesis. Functionally, catalyzes the last two sequential reactions in the de novo biosynthetic pathway for UDP-N-acetylglucosamine (UDP-GlcNAc). The C-terminal domain catalyzes the transfer of acetyl group from acetyl coenzyme A to glucosamine-1-phosphate (GlcN-1-P) to produce N-acetylglucosamine-1-phosphate (GlcNAc-1-P), which is converted into UDP-GlcNAc by the transfer of uridine 5-monophosphate (from uridine 5-triphosphate), a reaction catalyzed by the N-terminal domain. This Psychrobacter sp. (strain PRwf-1) protein is Bifunctional protein GlmU.